A 558-amino-acid chain; its full sequence is Phosphatase and actin regulator 3 (558 aa).

Residues 1–11 show a composition bias toward polar residues; the sequence is MAASEDGSSCL. 3 disordered regions span residues 1 to 69, 81 to 288, and 300 to 366; these read MAAS…KLAT, KKKN…RPLP, and LATK…ENLM. Residues 18–33 are compositionally biased toward low complexity; sequence QSDPSFLSDSSATSTD. Position 69 is a phosphothreonine (Thr-69). Residues 92 to 117 form an RPEL 1 repeat; that stretch reads SALEKKMAGRQGREELIKQGLLEMME. Residues 94 to 108 are compositionally biased toward basic and acidic residues; it reads LEKKMAGRQGREELI. Residues 144–169 show a composition bias toward polar residues; the sequence is ETLTSEGAQPGSPSASGTDQVSQDEL. Positions 228–239 are enriched in pro residues; the sequence is PSPPLLPTPPPK. Residue Ser-229 is modified to Phosphoserine. Residue Thr-235 is modified to Phosphothreonine. Composition is skewed to basic and acidic residues over residues 300–341 and 354–363; these read LATK…RDEA and ATKDSEENKE. RPEL repeat units lie at residues 400–425, 438–463, and 476–501; these read ELLA…PRRT, MKLS…KQRN, and QRLT…IRFS. Residues 449 to 485 adopt a coiled-coil conformation; the sequence is AVEELERRNILKQRNDQTEQEERREIKQRLTRKLNQR.

The protein belongs to the phosphatase and actin regulator family. As to quaternary structure, binds PPP1CA and actin; thus inhibiting the protein phosphatase 1 (PP1) activity.

It is found in the nucleus matrix. The protein is Phosphatase and actin regulator 3 (Phactr3) of Mus musculus (Mouse).